The primary structure comprises 528 residues: DNA primase large subunit (528 aa).

The H-T-H-like motif stretch occupies residues 210–239; the sequence is NEEHQRKQYFQQEKFIKLPFENVIELVGNR. Residues cysteine 336, cysteine 417, cysteine 434, and cysteine 474 each contribute to the [4Fe-4S] cluster site.

The protein belongs to the eukaryotic-type primase large subunit family. DNA polymerase alpha:primase is a four subunit enzyme complex, which is assembled throughout the cell cycle, and consists of the two DNA polymerase subunits A POL1 and B POL12, and the DNA primase large PRI2 and small PRI1 subunits. Interacts with MCM10. The cofactor is [4Fe-4S] cluster.

In terms of biological role, DNA primase is the polymerase that synthesizes small RNA primers for the Okazaki fragments made during discontinuous DNA replication. In a complex with DNA polymerase alpha (DNA polymerase alpha:primase) constitutes a replicative polymerase. Both primase components participate in formation of the active center, but the ATP-binding site is exclusively located on p48. The protein is DNA primase large subunit (PRI2) of Saccharomyces cerevisiae (strain ATCC 204508 / S288c) (Baker's yeast).